Consider the following 108-residue polypeptide: Glutaredoxin-1 (108 aa).

Positions 3 to 106 constitute a Glutaredoxin domain; sequence EEFVQQRLAN…DILSSIGVLR (104 aa). The cysteines at positions 23 and 26 are disulfide-linked.

This sequence belongs to the glutaredoxin family.

Its subcellular location is the virion. In terms of biological role, displays thioltransferase and dehydroascorbate reductase activities. The sequence is that of Glutaredoxin-1 (OPG075) from Vaccinia virus (strain Copenhagen) (VACV).